A 223-amino-acid chain; its full sequence is Guanylate kinase (223 aa).

The Guanylate kinase-like domain occupies 6 to 183 (GRLFVMTGAS…AVADFLAILT (178 aa)). Residue 13–20 (GASGVGKG) participates in ATP binding.

It belongs to the guanylate kinase family.

The protein localises to the cytoplasm. The catalysed reaction is GMP + ATP = GDP + ADP. Functionally, essential for recycling GMP and indirectly, cGMP. The protein is Guanylate kinase of Thermus thermophilus (strain ATCC 27634 / DSM 579 / HB8).